Reading from the N-terminus, the 1013-residue chain is Polyprotein of EF-Ts, chloroplastic (1013 aa).

Residues Met1–Phe43 constitute a chloroplast transit peptide. The 70-residue stretch at Gly64 to Lys133 folds into the S1 motif 1 domain. Positions Ser141–Thr150 are enriched in acidic residues. Residues Ser141 to Asp163 form a disordered region. The S1 motif 2 domain maps to Met227–Phe331. The interval Gln772–Val798 is disordered. Residues Pro781 to Lys793 show a composition bias toward basic and acidic residues.

It belongs to the EF-Ts family. In terms of assembly, component of the chloroplast ribosome 30S and 70S subunits, as well as polysomes. Component of the chloroplast ribosome 70S subunit, and at low levels, present in polysomes. As to quaternary structure, associates transiently with chloroplast polysomes.

It is found in the plastid. Its subcellular location is the chloroplast. Associates with the EF-Tu.GDP complex and induces the exchange of GDP to GTP. It remains bound to the aminoacyl-tRNA.EF-Tu.GTP complex up to the GTP hydrolysis stage on the ribosome. Functionally, binds to psbD and psbA mRNAs 5'-untranslated regions (UTRs) in vitro. The chain is Polyprotein of EF-Ts, chloroplastic from Chlamydomonas reinhardtii (Chlamydomonas smithii).